The primary structure comprises 215 residues: MATDYQDITIAFAGICQAATLVQQFANKGVADRAVFSSTIKSLLVTQPQSTLAVYDGNIAHLTMGLATVQAQMGGGNGKLDTEIGRYWINILALSQKLNKDPVAKSQLIQRLKQIERQLSLYDNDIMADQIIANLAAIYSEIISPLGSKIQVLGLQDYLVRPDIQHKVRASLLAGVRAGILWQQVGGSRWQFLFSRKKIFNQAKLFYKDFELSSD.

It belongs to the HflD family.

The protein localises to the cytoplasm. It is found in the cell inner membrane. This chain is High frequency lysogenization protein HflD homolog, found in Haemophilus ducreyi (strain 35000HP / ATCC 700724).